The primary structure comprises 185 residues: Elongation factor P (185 aa).

This sequence belongs to the elongation factor P family.

Its subcellular location is the cytoplasm. It functions in the pathway protein biosynthesis; polypeptide chain elongation. Its function is as follows. Involved in peptide bond synthesis. Stimulates efficient translation and peptide-bond synthesis on native or reconstituted 70S ribosomes in vitro. Probably functions indirectly by altering the affinity of the ribosome for aminoacyl-tRNA, thus increasing their reactivity as acceptors for peptidyl transferase. This is Elongation factor P from Picosynechococcus sp. (strain ATCC 27264 / PCC 7002 / PR-6) (Agmenellum quadruplicatum).